The sequence spans 86 residues: Large ribosomal subunit protein bL27 (86 aa).

This sequence belongs to the bacterial ribosomal protein bL27 family.

The protein is Large ribosomal subunit protein bL27 of Flavobacterium johnsoniae (strain ATCC 17061 / DSM 2064 / JCM 8514 / BCRC 14874 / CCUG 350202 / NBRC 14942 / NCIMB 11054 / UW101) (Cytophaga johnsonae).